The primary structure comprises 103 residues: Pyrimidine/purine nucleoside phosphorylase (103 aa).

The protein belongs to the nucleoside phosphorylase PpnP family.

It carries out the reaction a purine D-ribonucleoside + phosphate = a purine nucleobase + alpha-D-ribose 1-phosphate. The enzyme catalyses adenosine + phosphate = alpha-D-ribose 1-phosphate + adenine. It catalyses the reaction cytidine + phosphate = cytosine + alpha-D-ribose 1-phosphate. The catalysed reaction is guanosine + phosphate = alpha-D-ribose 1-phosphate + guanine. It carries out the reaction inosine + phosphate = alpha-D-ribose 1-phosphate + hypoxanthine. The enzyme catalyses thymidine + phosphate = 2-deoxy-alpha-D-ribose 1-phosphate + thymine. It catalyses the reaction uridine + phosphate = alpha-D-ribose 1-phosphate + uracil. The catalysed reaction is xanthosine + phosphate = alpha-D-ribose 1-phosphate + xanthine. In terms of biological role, catalyzes the phosphorolysis of diverse nucleosides, yielding D-ribose 1-phosphate and the respective free bases. Can use uridine, adenosine, guanosine, cytidine, thymidine, inosine and xanthosine as substrates. Also catalyzes the reverse reactions. The protein is Pyrimidine/purine nucleoside phosphorylase of Shewanella denitrificans (strain OS217 / ATCC BAA-1090 / DSM 15013).